A 59-amino-acid chain; its full sequence is UPF0434 protein VV1_2087 (59 aa).

This sequence belongs to the UPF0434 family.

In Vibrio vulnificus (strain CMCP6), this protein is UPF0434 protein VV1_2087.